A 412-amino-acid polypeptide reads, in one-letter code: Double C2-like domain-containing protein beta (412 aa).

The interval M1 to Y36 is negatively regulates targeting to plasma membrane. Residues M1–Y90 are mediates interaction with DYNLT1. Residues P38–D123 are disordered. Over residues G43 to A58 the composition is skewed to pro residues. The segment covering P59–D74 has biased composition (low complexity). The span at G95 to K108 shows a compositional bias: pro residues. Over residues D112–D123 the composition is skewed to acidic residues. C2 domains lie at A126–L250 and E266–H399. Ca(2+) contacts are provided by D157, D163, D218, D220, D297, D303, D357, D359, and D365. Residues D257 to N375 are mediates interaction with STXBP3. S411 bears the Phosphoserine mark.

In terms of assembly, interacts with cytoplasmic dynein light chain DYNLT1. May interact with UNC13A; the interaction mediates targeting to the plasma membrane. Probably interacts with the SNARE (soluble N-ethylmaleimide-sensitive factor attached protein receptor) complex composed of SNAP25, STX1A and VAMP2; the interaction is calcium-dependent and competitive with SYT1. Interacts with STX4; the interaction is calcium-dependent, increased by insulin and glucose, and mediates vesicle fusion with plasma membrane in pancreatic cells and adipocytes. Interacts with STXBP3; the interaction is direct, occurs at the cell membrane and regulates glucose-stimulated insulin secretion. It depends on Ca(2+) as a cofactor. In terms of tissue distribution, widely expressed. Expressed in pancreatic islet cells (at protein level).

Its subcellular location is the cytoplasm. The protein resides in the cytoplasmic granule. It localises to the cell membrane. In terms of biological role, calcium sensor which positively regulates SNARE-dependent fusion of vesicles with membranes. Binds phospholipids in a calcium-dependent manner and may act at the priming stage of fusion by modifying membrane curvature to stimulate fusion. Involved in calcium-triggered exocytosis in chromaffin cells and calcium-dependent spontaneous release of neurotransmitter in absence of action potentials in neuronal cells. Involved both in glucose-stimulated insulin secretion in pancreatic cells and insulin-dependent GLUT4 transport to the plasma membrane in adipocytes. This Mus musculus (Mouse) protein is Double C2-like domain-containing protein beta (Doc2b).